Here is a 275-residue protein sequence, read N- to C-terminus: MSYNSRNQRDSATINHKNQAVFNVEGVKVYYGGFLALIDVHLQIPDKEIIAFIGPSGCGKSTLLRCFNRMNDLIPGAKVEGRLHYRDRNIYDSRINSVKLRRQVGMVFQRPNPFPKSIYENIAFSPRANGYKGNLDELVEDSLRRAAIWNEVKDKLKAKGTALSGGQQQRLCIARAIAMKPDVLLMDEPCSALDPISTRQVEELCLELKEQYTIIMVTHNMQQASRVADWTAFFNTEIDEYGKRRGKLVEFSPTEQMFNSPNTKEAQEYISGRFG.

In terms of domain architecture, ABC transporter spans 22 to 261 (FNVEGVKVYY…SPTEQMFNSP (240 aa)). 54-61 (GPSGCGKS) is an ATP binding site.

The protein belongs to the ABC transporter superfamily. Phosphate importer (TC 3.A.1.7) family. The complex is composed of two ATP-binding proteins (PstB), two transmembrane proteins (PstC and PstA) and a solute-binding protein (PstS).

The protein localises to the cell inner membrane. It catalyses the reaction phosphate(out) + ATP + H2O = ADP + 2 phosphate(in) + H(+). Part of the ABC transporter complex PstSACB involved in phosphate import. Responsible for energy coupling to the transport system. This is Phosphate import ATP-binding protein PstB 1 from Trichormus variabilis (strain ATCC 29413 / PCC 7937) (Anabaena variabilis).